The chain runs to 276 residues: Large ribosomal subunit protein uL2c (276 aa).

Residues 225 to 256 form a disordered region; sequence NPVDHPHGGGEGRSPIGRPKPVSPWGKTALGA.

Belongs to the universal ribosomal protein uL2 family. As to quaternary structure, part of the 50S ribosomal subunit.

The protein localises to the plastid. It localises to the chloroplast. The chain is Large ribosomal subunit protein uL2c (rpl2) from Mesostigma viride (Green alga).